We begin with the raw amino-acid sequence, 236 residues long: Ribosome-inactivating protein saporin-3 (236 aa).

Glu-148 is an active-site residue.

It belongs to the ribosome-inactivating protein family. Type 1 RIP subfamily.

It carries out the reaction Endohydrolysis of the N-glycosidic bond at one specific adenosine on the 28S rRNA.. In terms of biological role, ribosome-inactivating protein of type 1, inhibits protein synthesis in animal cells. Useful as immunotoxin for pharmacological applications. The sequence is that of Ribosome-inactivating protein saporin-3 (SAP3) from Saponaria officinalis (Common soapwort).